A 567-amino-acid polypeptide reads, in one-letter code: Geranylgeranyl transferase type-2 subunit alpha (567 aa).

PFTA repeat units follow at residues 44 to 78 (LDESVLELTSQILGANPDFATLWNCRREVLQHLET), 88 to 122 (LVKAELGFLESCLRVNPKSYGTWHHRCWLLSRLPE), 124 to 158 (NWARELELCARFLEADERNFHCWDYRRFVAAQAAV), 159 to 193 (APAEELAFTDSLITRNFSNYSSWHYRSCLLPQLHP), 207 to 241 (VLLKELELVQNAFFTDPNDQSAWFYHRWLLGRAEP), and 363 to 397 (VLQSELESCKELQELEPENKWCLLTIILLMRALDP). Residue S98 is modified to Phosphoserine. LRR repeat units lie at residues 442–463 (DVRVLHLAHKDLTVLCHLEQLL), 464–486 (LVTHLDLSHNRLRALPPALAALR), 487–508 (CLEVLQASDNALENVDGVANLP), 509–530 (RLQELLLCNNRLQQSAAIQPLV), and 534–555 (RLVLLNLQGNSLCQEEGIQERL).

This sequence belongs to the protein prenyltransferase subunit alpha family. In terms of assembly, heterotrimer composed of RABGGTA, RABGGTB and CHM; within this trimer, RABGGTA and RABGGTB form the catalytic component B, while CHM (component A) mediates peptide substrate binding. The Rab GGTase dimer (RGGT) interacts with CHM (component A) prior to Rab protein binding; the association is stabilized by geranylgeranyl pyrophosphate (GGpp). The CHM:RGGT:Rab complex is destabilized by GGpp. Interacts with non-phosphorylated form of RAB8A; phosphorylation of RAB8A at 'Thr-72' disrupts this interaction. Most abundant in the heart, brain, spleen and liver. Less in the lung, muscle, kidney and testis; in these tissues less abundant than the beta subunit.

The enzyme catalyses geranylgeranyl diphosphate + L-cysteinyl-[protein] = S-geranylgeranyl-L-cysteinyl-[protein] + diphosphate. The enzymatic reaction requires the aid of a Rab escort protein (also called component A), such as CHM. Its function is as follows. Catalyzes the transfer of a geranylgeranyl moiety from geranylgeranyl diphosphate to both cysteines of Rab proteins with the C-terminal sequence -XXCC, -XCXC and -CCXX, such as RAB1A, RAB3A, RAB5A and RAB7A. In Rattus norvegicus (Rat), this protein is Geranylgeranyl transferase type-2 subunit alpha (Rabggta).